Here is a 621-residue protein sequence, read N- to C-terminus: Chaperone protein HtpG (621 aa).

The a; substrate-binding stretch occupies residues 1 to 325 (MTDASVKETF…SQDLSLNVSR (325 aa)). Positions 326 to 541 (EMLQSDPKLA…EGDIDVNLER (216 aa)) are b. Positions 542–621 (MLKRHGQLQD…RLGSVMDSAL (80 aa)) are c.

This sequence belongs to the heat shock protein 90 family. In terms of assembly, homodimer.

Its subcellular location is the cytoplasm. Functionally, molecular chaperone. Has ATPase activity. The protein is Chaperone protein HtpG of Roseobacter denitrificans (strain ATCC 33942 / OCh 114) (Erythrobacter sp. (strain OCh 114)).